An 89-amino-acid polypeptide reads, in one-letter code: MGFTDETVRFNLDDGNKKEISETLTHVYRSLEEKGYNPINQIVGYVLSGDPAYVPRYNDARNQIRKYERDEIVEELVRYYLQGNGIDLK.

The protein belongs to the UPF0297 family.

In Streptococcus mutans serotype c (strain ATCC 700610 / UA159), this protein is UPF0297 protein SMU_2079c.